A 102-amino-acid polypeptide reads, in one-letter code: Small ribosomal subunit protein uS17 (102 aa).

Residues 1 to 15 (MTDETASQEASQSTD) show a composition bias toward polar residues. Positions 1-20 (MTDETASQEASQSTDAAAPA) are disordered.

It belongs to the universal ribosomal protein uS17 family. Part of the 30S ribosomal subunit.

One of the primary rRNA binding proteins, it binds specifically to the 5'-end of 16S ribosomal RNA. The polypeptide is Small ribosomal subunit protein uS17 (Frankia casuarinae (strain DSM 45818 / CECT 9043 / HFP020203 / CcI3)).